We begin with the raw amino-acid sequence, 761 residues long: 5-methyltetrahydropteroyltriglutamate--homocysteine methyltransferase (761 aa).

5-methyltetrahydropteroyltri-L-glutamate contacts are provided by residues 16 to 19 and Lys116; that span reads RELK. L-homocysteine contacts are provided by residues 435–437 and Glu488; that span reads IGS. Residues 435-437 and Glu488 each bind L-methionine; that span reads IGS. 5-methyltetrahydropteroyltri-L-glutamate-binding positions include 519–520 and Trp565; that span reads RC. Residue Asp603 coordinates L-homocysteine. An L-methionine-binding site is contributed by Asp603. Glu609 is a binding site for 5-methyltetrahydropteroyltri-L-glutamate. Zn(2+)-binding residues include His645, Cys647, and Glu669. The Proton donor role is filled by His698. Cys730 serves as a coordination point for Zn(2+).

Belongs to the vitamin-B12 independent methionine synthase family. Requires Zn(2+) as cofactor.

It carries out the reaction 5-methyltetrahydropteroyltri-L-glutamate + L-homocysteine = tetrahydropteroyltri-L-glutamate + L-methionine. It participates in amino-acid biosynthesis; L-methionine biosynthesis via de novo pathway; L-methionine from L-homocysteine (MetE route): step 1/1. Functionally, catalyzes the transfer of a methyl group from 5-methyltetrahydrofolate to homocysteine resulting in methionine formation. The protein is 5-methyltetrahydropteroyltriglutamate--homocysteine methyltransferase of Hahella chejuensis (strain KCTC 2396).